The chain runs to 183 residues: DNA-directed RNA polymerase subunit Rpo7 (183 aa).

The S1 motif domain occupies 82–164 (HEVIEGEVSQ…RLPRIALTMK (83 aa)).

The protein belongs to the eukaryotic RPB7/RPC8 RNA polymerase subunit family. In terms of assembly, part of the 13-subunit RNA polymerase complex. Forms a stalk with Rpo4 that extends from the main structure.

It is found in the cytoplasm. It carries out the reaction RNA(n) + a ribonucleoside 5'-triphosphate = RNA(n+1) + diphosphate. Functionally, DNA-dependent RNA polymerase (RNAP) catalyzes the transcription of DNA into RNA using the four ribonucleoside triphosphates as substrates. Its function is as follows. Reconstitution experiments show this subunit is required for basic activity. The chain is DNA-directed RNA polymerase subunit Rpo7 from Sulfolobus acidocaldarius (strain ATCC 33909 / DSM 639 / JCM 8929 / NBRC 15157 / NCIMB 11770).